Consider the following 1180-residue polypeptide: uncharacterized protein (1180 aa).

7 disordered regions span residues 229–280 (RQQG…DTSI), 431–465 (KQPPKEKAHRRGAPHPESEPESSEESTPVWRPPLK), 484–575 (SRDT…PNMR), 730–758 (GRPLRETHHNDQDPEPRSMTLDSPRASRT), 810–986 (GKAE…ASWD), 1045–1109 (RLQE…ELEM), and 1125–1152 (ERLEYQRRKQEAEEKARLEAEERRQKEE). Residues 269–279 (QEDETQAEDTS) are compositionally biased toward acidic residues. The span at 431-443 (KQPPKEKAHRRGA) shows a compositional bias: basic residues. Residues 486–497 (DTLSPQGSSSLP) are compositionally biased toward polar residues. The span at 509–518 (SKARHTRVHS) shows a compositional bias: basic residues. 3 stretches are compositionally biased toward basic and acidic residues: residues 730 to 745 (GRPLRETHHNDQDPEP), 826 to 837 (SHERDLINEAKR), and 846 to 856 (TKGPKSEREGK). The span at 872–889 (KAKKKLEKKTRPQRKRTQ) shows a compositional bias: basic residues. Over residues 937–959 (QESQVSLDGRSSPSQIATVTGNM) the composition is skewed to polar residues. Basic and acidic residues-rich tracts occupy residues 960-986 (ESKEERRCEDPSKALLTKREQEKASWD), 1045-1106 (RLQE…RQEE), and 1127-1152 (LEYQRRKQEAEEKARLEAEERRQKEE). A coiled-coil region spans residues 988-1171 (LRAERAEMRW…ATKQAQEQAR (184 aa)).

This is an uncharacterized protein from Homo sapiens (Human).